The primary structure comprises 236 residues: 15,16-dihydrobiliverdin:ferredoxin oxidoreductase (236 aa).

It belongs to the HY2 family.

The catalysed reaction is 15,16-dihydrobiliverdin + oxidized 2[4Fe-4S]-[ferredoxin] = biliverdin IXalpha + reduced 2[4Fe-4S]-[ferredoxin] + 2 H(+). Functionally, catalyzes the two-electron reduction of biliverdin IX-alpha at the C15 methine bridge. This is 15,16-dihydrobiliverdin:ferredoxin oxidoreductase from Prochlorococcus marinus (strain MIT 9312).